A 173-amino-acid chain; its full sequence is Small ribosomal subunit protein uS5 (173 aa).

The S5 DRBM domain occupies 18–81 (LREKMIAVNR…EQARRGMFKV (64 aa)).

Belongs to the universal ribosomal protein uS5 family. In terms of assembly, part of the 30S ribosomal subunit. Contacts proteins S4 and S8.

Functionally, with S4 and S12 plays an important role in translational accuracy. In terms of biological role, located at the back of the 30S subunit body where it stabilizes the conformation of the head with respect to the body. The polypeptide is Small ribosomal subunit protein uS5 (Bordetella avium (strain 197N)).